Reading from the N-terminus, the 622-residue chain is Elongation factor 4 (622 aa).

The region spanning 17–201 (ALIRNFCIIA…KVVAEVPAPV (185 aa)) is the tr-type G domain. GTP contacts are provided by residues 29 to 34 (DHGKST) and 148 to 151 (NKID).

It belongs to the TRAFAC class translation factor GTPase superfamily. Classic translation factor GTPase family. LepA subfamily.

The protein localises to the cell membrane. It catalyses the reaction GTP + H2O = GDP + phosphate + H(+). Its function is as follows. Required for accurate and efficient protein synthesis under certain stress conditions. May act as a fidelity factor of the translation reaction, by catalyzing a one-codon backward translocation of tRNAs on improperly translocated ribosomes. Back-translocation proceeds from a post-translocation (POST) complex to a pre-translocation (PRE) complex, thus giving elongation factor G a second chance to translocate the tRNAs correctly. Binds to ribosomes in a GTP-dependent manner. The chain is Elongation factor 4 from Streptomyces avermitilis (strain ATCC 31267 / DSM 46492 / JCM 5070 / NBRC 14893 / NCIMB 12804 / NRRL 8165 / MA-4680).